We begin with the raw amino-acid sequence, 537 residues long: Glutamate--tRNA ligase (537 aa).

A 'HIGH' region motif is present at residues 9–19; it reads PSPTGLQHIGG. Residues Cys-125, Cys-127, Cys-152, and Glu-154 each contribute to the Zn(2+) site. Residues 270-274 carry the 'KMSKS' region motif; sequence KLSKR. Lys-273 is a binding site for ATP.

This sequence belongs to the class-I aminoacyl-tRNA synthetase family. Glutamate--tRNA ligase type 1 subfamily. Monomer. Requires Zn(2+) as cofactor.

The protein localises to the cytoplasm. The enzyme catalyses tRNA(Glu) + L-glutamate + ATP = L-glutamyl-tRNA(Glu) + AMP + diphosphate. Functionally, catalyzes the attachment of glutamate to tRNA(Glu) in a two-step reaction: glutamate is first activated by ATP to form Glu-AMP and then transferred to the acceptor end of tRNA(Glu). The protein is Glutamate--tRNA ligase of Treponema pallidum (strain Nichols).